The sequence spans 772 residues: Gelsolin (772 aa).

The N-terminal stretch at 1–17 (LGALVVALCALSPPARA) is a signal peptide. Residues 18 to 33 (ATASRGAPQARAPQGR) constitute a propeptide that is removed on maturation. Positions 19-38 (TASRGAPQARAPQGRVSPMR) are disordered. The interval 41 to 166 (TMVVEHPEFL…YKKGGVASGF (126 aa)) is actin-severing. One copy of the Gelsolin-like 1 repeat lies at 66-148 (FDLVPVPPNL…VQGFESATFL (83 aa)). Position 76 is a phosphotyrosine (Y76). The Ca(2+) site is built by G82, D83, E114, D126, G131, and A133. The actin-actin interfilament contact point stretch occupies residues 113 to 116 (DESG). Position 152–159 (152–159 (KSGLKYKK)) interacts with a 1,2-diacyl-sn-glycero-3-phospho-(1D-myo-inositol-4,5-bisphosphate). V162 lines the Ca(2+) pocket. An a 1,2-diacyl-sn-glycero-3-phospho-(1D-myo-inositol-4,5-bisphosphate)-binding site is contributed by 178-186 (RLFQVKGRR). A Gelsolin-like 2 repeat occupies 188–260 (VRATEVPVSW…SEEDAEPAGM (73 aa)). 2 residues coordinate Ca(2+): G203 and D204. C205 and C218 are disulfide-bonded. Residues E226, D276, E319, D320, and E344 each coordinate Ca(2+). A Gelsolin-like 3 repeat occupies 307 to 379 (DENPFAQGAL…LPEGGETPLF (73 aa)). Phosphotyrosine occurs at positions 399 and 455. Residues 424–772 (AAQHGMDDDG…LDRAIAELAA (349 aa)) are actin-binding, Ca-sensitive. One copy of the Gelsolin-like 4 repeat lies at 445–526 (SNKVPVDPAT…VQGKEPAHLM (82 aa)). Ca(2+)-binding residues include G461, D462, E492, D504, G509, P511, and T541. The stretch at 567-632 (RAVEVIPKAG…AEGSEPDSFW (66 aa)) is one Gelsolin-like 5 repeat. The residue at position 574 (K574) is an N6-acetyllysine. Residues N581 and D582 each coordinate Ca(2+). At Y593 the chain carries Phosphotyrosine. E604 provides a ligand contact to Ca(2+). Residue Y641 is modified to Phosphotyrosine. Residues 671–746 (VEEVPGELMQ…VKQGFEPPSF (76 aa)) form a Gelsolin-like 6 repeat. D686, D687, and E709 together coordinate Ca(2+). At T732 the chain carries Phosphothreonine.

Belongs to the villin/gelsolin family. As to quaternary structure, binds to actin and to fibronectin. Identified in a complex composed of ACTA1, COBL, GSN and TMSB4X. Interacts with the inactive form of EIF2AK2/PKR. Interacts with FLII. In terms of processing, phosphorylated on tyrosine residues in vitro.

The protein localises to the cytoplasm. It localises to the cytoskeleton. Its subcellular location is the secreted. Functionally, calcium-regulated, actin-modulating protein that binds to the plus (or barbed) ends of actin monomers or filaments, preventing monomer exchange (end-blocking or capping). It can promote the assembly of monomers into filaments (nucleation) as well as sever filaments already formed. Plays a role in ciliogenesis. The chain is Gelsolin (GSN) from Sus scrofa (Pig).